The chain runs to 403 residues: Sulfate adenylyltransferase (403 aa).

Belongs to the sulfate adenylyltransferase family.

The catalysed reaction is sulfate + ATP + H(+) = adenosine 5'-phosphosulfate + diphosphate. It functions in the pathway sulfur metabolism; hydrogen sulfide biosynthesis; sulfite from sulfate: step 1/3. This Pelodictyon phaeoclathratiforme (strain DSM 5477 / BU-1) protein is Sulfate adenylyltransferase.